Here is a 285-residue protein sequence, read N- to C-terminus: Nucleotide-binding protein Pfl01_0854 (285 aa).

Position 8 to 15 (8 to 15 (GRSGSGKS)) interacts with ATP. 60–63 (DARN) provides a ligand contact to GTP.

Belongs to the RapZ-like family.

Its function is as follows. Displays ATPase and GTPase activities. The protein is Nucleotide-binding protein Pfl01_0854 of Pseudomonas fluorescens (strain Pf0-1).